Reading from the N-terminus, the 198-residue chain is Nucleoid occlusion factor SlmA (198 aa).

Positions 10–70 (NRREEILQSL…SLIEFIEDSL (61 aa)) constitute an HTH tetR-type domain. The segment at residues 33 to 52 (TTAKLAASVGVSEAALYRHF) is a DNA-binding region (H-T-H motif). The stretch at 117 to 144 (EQDRLQGRINQLFERIEAQLRQVLREKR) forms a coiled coil.

It belongs to the nucleoid occlusion factor SlmA family. As to quaternary structure, homodimer. Interacts with FtsZ.

It localises to the cytoplasm. It is found in the nucleoid. Its function is as follows. Required for nucleoid occlusion (NO) phenomenon, which prevents Z-ring formation and cell division over the nucleoid. Acts as a DNA-associated cell division inhibitor that binds simultaneously chromosomal DNA and FtsZ, and disrupts the assembly of FtsZ polymers. SlmA-DNA-binding sequences (SBS) are dispersed on non-Ter regions of the chromosome, preventing FtsZ polymerization at these regions. The chain is Nucleoid occlusion factor SlmA from Salmonella paratyphi A (strain ATCC 9150 / SARB42).